Reading from the N-terminus, the 94-residue chain is (2R)-sulfolactate sulfo-lyase subunit alpha (94 aa).

Positions 16–90 constitute an AFP-like domain; it reads VVVVEGVEAG…GEHVHVHNVK (75 aa).

In terms of assembly, (2R)-sulfolactate sulfo-lyase is composed of a SuyA and a SuyB subunit.

The protein localises to the cytoplasm. It carries out the reaction (2R)-3-sulfolactate = sulfite + pyruvate + H(+). Together with SuyB, desulfonates sulfolactate to pyruvate and sulfite. This chain is (2R)-sulfolactate sulfo-lyase subunit alpha (suyA), found in Chromohalobacter salexigens (strain ATCC BAA-138 / DSM 3043 / CIP 106854 / NCIMB 13768 / 1H11).